Reading from the N-terminus, the 490-residue chain is Betaine aldehyde dehydrogenase (490 aa).

Ile27 and Asp93 together coordinate K(+). 150–152 is a binding site for NAD(+); sequence GAW. Lys162 functions as the Charge relay system in the catalytic mechanism. 176 to 179 provides a ligand contact to NAD(+); that stretch reads KPSE. Residue Val180 participates in K(+) binding. 230-233 contacts NAD(+); that stretch reads GTDT. Leu246 provides a ligand contact to K(+). Catalysis depends on Glu252, which acts as the Proton acceptor. Residues Gly254, Cys286, and Glu387 each coordinate NAD(+). Cys286 functions as the Nucleophile in the catalytic mechanism. Cys286 carries the post-translational modification Cysteine sulfenic acid (-SOH). K(+) contacts are provided by Lys457 and Gly460. Glu464 functions as the Charge relay system in the catalytic mechanism.

Belongs to the aldehyde dehydrogenase family. Dimer of dimers. K(+) is required as a cofactor.

It carries out the reaction betaine aldehyde + NAD(+) + H2O = glycine betaine + NADH + 2 H(+). It participates in amine and polyamine biosynthesis; betaine biosynthesis via choline pathway; betaine from betaine aldehyde: step 1/1. Its function is as follows. Involved in the biosynthesis of the osmoprotectant glycine betaine. Catalyzes the irreversible oxidation of betaine aldehyde to the corresponding acid. In Pseudomonas fluorescens (strain ATCC BAA-477 / NRRL B-23932 / Pf-5), this protein is Betaine aldehyde dehydrogenase.